Reading from the N-terminus, the 172-residue chain is Protein 3 (172 aa).

The sequence is that of Protein 3 (3) from Northern cereal mosaic virus (NCMV).